A 489-amino-acid polypeptide reads, in one-letter code: Probable cytosol aminopeptidase (489 aa).

Positions 254 and 259 each coordinate Mn(2+). Lysine 266 is an active-site residue. Mn(2+) is bound by residues aspartate 277, aspartate 336, and glutamate 338. Residue arginine 340 is part of the active site.

The protein belongs to the peptidase M17 family. Mn(2+) is required as a cofactor.

The protein localises to the cytoplasm. It carries out the reaction Release of an N-terminal amino acid, Xaa-|-Yaa-, in which Xaa is preferably Leu, but may be other amino acids including Pro although not Arg or Lys, and Yaa may be Pro. Amino acid amides and methyl esters are also readily hydrolyzed, but rates on arylamides are exceedingly low.. The enzyme catalyses Release of an N-terminal amino acid, preferentially leucine, but not glutamic or aspartic acids.. In terms of biological role, presumably involved in the processing and regular turnover of intracellular proteins. Catalyzes the removal of unsubstituted N-terminal amino acids from various peptides. This Cereibacter sphaeroides (strain ATCC 17025 / ATH 2.4.3) (Rhodobacter sphaeroides) protein is Probable cytosol aminopeptidase.